The chain runs to 721 residues: Protein mu-NS (721 aa).

The segment at 1 to 13 (MASFKGFSANTVP) is interaction with sigma-NS. The segment at 1–38 (MASFKGFSANTVPVSKAKRDISSLAATPGLRSQSFTPS) is RNA-binding. The tract at residues 14–40 (VSKAKRDISSLAATPGLRSQSFTPSVD) is interaction with mu-2. The tract at residues 471 to 721 (SNDVTDGIKL…IDFSVPTDEL (251 aa)) is involved in the formation of factory-like inclusions. Coiled-coil stretches lie at residues 522 to 559 (PLLSQLRELSSEVTRLQMELSRAQSLNAQLEADVKSAQ) and 628 to 684 (LMNG…ALNQ).

It belongs to the orthoreovirus mu-NS protein family. In terms of assembly, interacts with mu-2. Interacts with sigma-NS; in viral factories. Interacts with the inner capsid proteins lambda-1 and sigma-2, and outer capsid protein lambda-2; in viral factories. In terms of processing, the N-terminus is blocked.

It is found in the host cytoplasm. In terms of biological role, non-structural protein implicated with protein sigma-NS in forming the matrix of viral factories, which are large inclusions in the host cytoplasm where replication intermediates are assembled and viral RNA replication takes place. Together with mu-2, recruits the other core proteins to these factories. Binds RNA and recruits viral mRNAs to sites of viral replication. The sequence is that of Protein mu-NS (M3) from Reovirus type 3 (strain Dearing) (T3D).